Here is a 462-residue protein sequence, read N- to C-terminus: Elongation factor 1-alpha (462 aa).

Gly2 carries the post-translational modification N,N,N-trimethylglycine. Residue Lys3 is modified to N6,N6-dimethyllysine; alternate. Residue Lys3 is modified to N6-methyllysine; alternate. The region spanning 5-242 (KAHVNVVVIG…DAIEPPVRPS (238 aa)) is the tr-type G domain. The segment at 14 to 21 (GHVDSGKS) is G1. 14–21 (GHVDSGKS) contacts GTP. Position 30 is an N6-methyllysine (Lys30). Residues 70–74 (GITID) are G2. Lys79 carries the post-translational modification N6,N6,N6-trimethyllysine. Positions 91-94 (DAPG) are G3. GTP contacts are provided by residues 91–95 (DAPGH) and 153–156 (NKMD). The segment at 153–156 (NKMD) is G4. The segment at 192–194 (SGW) is G5. N6,N6-dimethyllysine; alternate is present on Lys318. The residue at position 318 (Lys318) is an N6-methyllysine; alternate. Position 392 is an N6-methyllysine (Lys392).

It belongs to the TRAFAC class translation factor GTPase superfamily. Classic translation factor GTPase family. EF-Tu/EF-1A subfamily.

It is found in the cytoplasm. Functionally, this protein promotes the GTP-dependent binding of aminoacyl-tRNA to the A-site of ribosomes during protein biosynthesis. The sequence is that of Elongation factor 1-alpha (TEF1) from Serendipita indica (Root endophyte fungus).